The sequence spans 161 residues: Shikimate kinase (161 aa).

10-15 (GAGKTT) contacts ATP. Position 14 (threonine 14) interacts with Mg(2+). Substrate contacts are provided by aspartate 28, arginine 52, and glycine 74. Residue arginine 114 participates in ATP binding. Arginine 132 lines the substrate pocket.

It belongs to the shikimate kinase family. As to quaternary structure, monomer. Mg(2+) is required as a cofactor.

The protein resides in the cytoplasm. The catalysed reaction is shikimate + ATP = 3-phosphoshikimate + ADP + H(+). It participates in metabolic intermediate biosynthesis; chorismate biosynthesis; chorismate from D-erythrose 4-phosphate and phosphoenolpyruvate: step 5/7. Its function is as follows. Catalyzes the specific phosphorylation of the 3-hydroxyl group of shikimic acid using ATP as a cosubstrate. This Streptococcus gordonii (strain Challis / ATCC 35105 / BCRC 15272 / CH1 / DL1 / V288) protein is Shikimate kinase.